We begin with the raw amino-acid sequence, 919 residues long: MGRSNSRSHSSRSKSRSQSSSRSRSRSHSRKKRYSSRSRSRTYSRSRSRDRIYSRDYRRDYRNNRGMRRPYGYRGRGRGYYQGGGGRYHRGGYRPVWNRRHSRSPRRGRSRSRSPKRRSVSSQRSRSRSRRSYRSSRSPRSSSSRSSSPYSKSPVSKRRGSQEKQTKKAEGEPQEESPLKSKSQEEPKDTFEHDPSESIDEFNKSATSGDIWPGLSAYDNSPRSPHSPSPIATPPSQSSSCSDAPMLSTVHSAKNTPSQHSHSIQHSPERSGSGSVGNGSSRYSPSQNSPIHHIPSRRSPAKTITPQNAPREESRGRSSFYPEGDQETAKTGKFLKRFTDEESRVFLLDRGNIRDKEAPKEKGSEKGRADGDWDDQEVLDYFSDKESAKQKFHDSEGDDTEETEDYRQFRKSVLADQGKSFATSSHRNTEEEGPKYKSKVSLKGNRESDGFREEKNYKLKETAYIVERPSTAKDKHKEEDKGSDRITVKKEVQSPEQVKSEKLKELFDYSPPLHKSLDAREKSIFREESPLRIKMIASDSHRPEVKLKMAPVPLDDSNRPASLTKDRLLASTLVHSVKKEQEFRSIFDHIKLPQANKSTSESFIQHIVSLVHHVKEQYFKSPAVTLNERFTSYQKATEEHSTRQKSPEIHRRIDISPSALRKHTRLAGEERGFKEEIQKGDKKLRCDSADLRHDIDRRRKERSKERGDSKGSRESSGSRKQEKTPKDYKEYKPYKDDSKHKGRERDHSRSSSSSASPSSPSSREEKESKKEREEEFKTHHEMKDYSGFAGVSRPRGTFFRIRGRGRARGVFAGTNTGPNNSNTTFQKRPKEEEWDPEYTPKSKKYFLHDDRDDGVDYWAKRGRGRGTFQRGRGRFNFKKSGSSPKWTHDKYQGDGIVEDDEETMENNEEKKDRRKEEKE.

Positions 1 to 454 (MGRSNSRSHS…NRESDGFREE (454 aa)) are disordered. Positions 23-46 (SRSRSHSRKKRYSSRSRSRTYSRS) are enriched in basic residues. A compositionally biased stretch (basic and acidic residues) spans 47–63 (RSRDRIYSRDYRRDYRN). Residues 87–134 (RYHRGGYRPVWNRRHSRSPRRGRSRSRSPKRRSVSSQRSRSRSRRSYR) are compositionally biased toward basic residues. Phosphoserine is present on residues serine 102 and serine 104. A compositionally biased stretch (low complexity) spans 135 to 154 (SSRSPRSSSSRSSSPYSKSP). Position 152 is an N6-acetyllysine (lysine 152). The span at 160–196 (GSQEKQTKKAEGEPQEESPLKSKSQEEPKDTFEHDPS) shows a compositional bias: basic and acidic residues. 2 positions are modified to phosphoserine: serine 177 and serine 181. Lysine 188 participates in a covalent cross-link: Glycyl lysine isopeptide (Lys-Gly) (interchain with G-Cter in SUMO2). 2 positions are modified to phosphoserine: serine 196 and serine 198. Tyrosine 218 is subject to Phosphotyrosine. A phosphoserine mark is found at serine 221, serine 258, serine 261, serine 263, and serine 267. Residue tyrosine 283 is modified to Phosphotyrosine. Phosphoserine occurs at positions 284, 289, 296, and 299. At threonine 305 the chain carries Phosphothreonine. A Phosphoserine modification is found at serine 314. Lysine 330 is subject to N6-acetyllysine; alternate. A Glycyl lysine isopeptide (Lys-Gly) (interchain with G-Cter in SUMO2); alternate cross-link involves residue lysine 330. The residue at position 339 (threonine 339) is a Phosphothreonine. Over residues 351-371 (GNIRDKEAPKEKGSEKGRADG) the composition is skewed to basic and acidic residues. Tyrosine 381 is modified (phosphotyrosine). The span at 382-395 (FSDKESAKQKFHDS) shows a compositional bias: basic and acidic residues. Serine 383, serine 387, and serine 395 each carry phosphoserine. Phosphothreonine is present on threonine 400. Lysine 411 is covalently cross-linked (Glycyl lysine isopeptide (Lys-Gly) (interchain with G-Cter in SUMO2)). The residue at position 419 (lysine 419) is an N6-acetyllysine; alternate. Lysine 419 is covalently cross-linked (Glycyl lysine isopeptide (Lys-Gly) (interchain with G-Cter in SUMO2); alternate). 2 positions are modified to phosphoserine: serine 420 and serine 425. Position 429 is a phosphothreonine (threonine 429). Lysine 435 is subject to N6-acetyllysine; alternate. Residue lysine 435 forms a Glycyl lysine isopeptide (Lys-Gly) (interchain with G-Cter in SUMO2); alternate linkage. The segment covering 444 to 454 (GNRESDGFREE) has biased composition (basic and acidic residues). The residue at position 448 (serine 448) is a Phosphoserine. Residues lysine 455 and lysine 460 each participate in a glycyl lysine isopeptide (Lys-Gly) (interchain with G-Cter in SUMO2) cross-link. Residues 468-499 (RPSTAKDKHKEEDKGSDRITVKKEVQSPEQVK) are disordered. Serine 470 is modified (phosphoserine). Positions 470 to 499 (STAKDKHKEEDKGSDRITVKKEVQSPEQVK) are enriched in basic and acidic residues. At lysine 473 the chain carries N6-acetyllysine. Glycyl lysine isopeptide (Lys-Gly) (interchain with G-Cter in SUMO2) cross-links involve residues lysine 489 and lysine 490. Serine 494 carries the post-translational modification Phosphoserine. Lysine 499 participates in a covalent cross-link: Glycyl lysine isopeptide (Lys-Gly) (interchain with G-Cter in SUMO2). 4 positions are modified to phosphoserine: serine 500, serine 510, serine 523, and serine 529. Glycyl lysine isopeptide (Lys-Gly) (interchain with G-Cter in SUMO2) cross-links involve residues lysine 534, lysine 546, and lysine 548. A phosphoserine mark is found at serine 557 and serine 562. Residue threonine 564 is modified to Phosphothreonine. Lysine 565 is covalently cross-linked (Glycyl lysine isopeptide (Lys-Gly) (interchain with G-Cter in SUMO2)). A Phosphoserine modification is found at serine 576. A Glycyl lysine isopeptide (Lys-Gly) (interchain with G-Cter in SUMO2); alternate cross-link involves residue lysine 578. Lysine 578 participates in a covalent cross-link: Glycyl lysine isopeptide (Lys-Gly) (interchain with G-Cter in SUMO1); alternate. Glycyl lysine isopeptide (Lys-Gly) (interchain with G-Cter in SUMO2) cross-links involve residues lysine 591, lysine 597, and lysine 620. Phosphoserine occurs at positions 646, 656, and 658. Residues 670 to 749 (ERGFKEEIQK…HKGRERDHSR (80 aa)) are compositionally biased toward basic and acidic residues. Positions 670–793 (ERGFKEEIQK…DYSGFAGVSR (124 aa)) are disordered. A Glycyl lysine isopeptide (Lys-Gly) (interchain with G-Cter in SUMO2) cross-link involves residue lysine 674. 2 positions are modified to phosphoserine: serine 688 and serine 759. Positions 750 to 761 (SSSSSASPSSPS) are enriched in low complexity. Basic and acidic residues predominate over residues 762-784 (SREEKESKKEREEEFKTHHEMKD). Residues lysine 777 and lysine 783 each participate in a glycyl lysine isopeptide (Lys-Gly) (interchain with G-Cter in SUMO2) cross-link. Position 802 is a citrulline (arginine 802). Omega-N-methylarginine is present on arginine 808. Low complexity predominate over residues 809–824 (GVFAGTNTGPNNSNTT). Disordered stretches follow at residues 809 to 839 (GVFA…PEYT) and 861 to 919 (RGRG…EEKE). Residue lysine 830 forms a Glycyl lysine isopeptide (Lys-Gly) (interchain with G-Cter in SUMO2); alternate linkage. Residue lysine 830 forms a Glycyl lysine isopeptide (Lys-Gly) (interchain with G-Cter in SUMO1); alternate linkage. A compositionally biased stretch (acidic residues) spans 896–906 (IVEDDEETMEN). A compositionally biased stretch (basic and acidic residues) spans 907-919 (NEEKKDRRKEEKE). A Glycyl lysine isopeptide (Lys-Gly) (interchain with G-Cter in SUMO2) cross-link involves residue lysine 910.

It belongs to the BCLAF1/THRAP3 family. In terms of assembly, interacts with Bcl-2 related proteins, EMD, with the adenovirus E1B 19 kDa protein and with DNA. Component of the SNARP complex which consists at least of SNIP1, SNW1, THRAP3, BCLAF1 and PNN. Component of a MACOM-like complex, named WTAP complex, composed of WTAP, ZC3H13, CBLL1, KIAA1429, RBM15, BCLAF1 and THRAP3. Post-translationally, citrullinated by PADI4.

It is found in the cytoplasm. The protein localises to the nucleus. The protein resides in the nucleus speckle. Its subcellular location is the nucleoplasm. Its function is as follows. Death-promoting transcriptional repressor. May be involved in cyclin-D1/CCND1 mRNA stability through the SNARP complex which associates with both the 3'end of the CCND1 gene and its mRNA. This is Bcl-2-associated transcription factor 1 (Bclaf1) from Mus musculus (Mouse).